We begin with the raw amino-acid sequence, 306 residues long: MRVVFMGTPEFSVPILTAIIGHGYEVVAAYTQPPRPAGRRGLELTRSPVHEKAEQFGIPVFTPTSLKGAEEQDVFASLEADVAIVVAYGLLLPKAILDAPRLGCYNGHASLLPRWRGAAPIQRAIMAGDAETGMMIMKMDEGLDTGPVAMAEKVAITPDMTAGELHDRLSMIGADLMIRALGALERESLALQPQAEEGVTYAAKIDKAEARIDWSKPAKDVHNSIRGLSPFPGAWCEMEINGAVERVKLQRSTLGEGSGAPGTVLDDRLTIACGEGAVRLATLQRSGGKPLPAQEFLRGQRVTKVL.

Position 110 to 113 (110 to 113 (SLLP)) interacts with (6S)-5,6,7,8-tetrahydrofolate.

This sequence belongs to the Fmt family.

The catalysed reaction is L-methionyl-tRNA(fMet) + (6R)-10-formyltetrahydrofolate = N-formyl-L-methionyl-tRNA(fMet) + (6S)-5,6,7,8-tetrahydrofolate + H(+). Functionally, attaches a formyl group to the free amino group of methionyl-tRNA(fMet). The formyl group appears to play a dual role in the initiator identity of N-formylmethionyl-tRNA by promoting its recognition by IF2 and preventing the misappropriation of this tRNA by the elongation apparatus. This is Methionyl-tRNA formyltransferase from Brucella abortus (strain S19).